Here is a 129-residue protein sequence, read N- to C-terminus: RxLR effector protein PexRD43 (129 aa).

Positions 1-16 (MRLAMILLSIPLFVSG) are cleaved as a signal peptide. Positions 44–56 (RSLRTSGEANEER) match the RxLR-dEER motif.

This sequence belongs to the RxLR effector family.

The protein resides in the secreted. The protein localises to the host cytoplasm. It is found in the host nucleus. Effector that enhances P.infestans colonization of Nicotiana benthamiana leaves. The protein is RxLR effector protein PexRD43 of Phytophthora infestans (strain T30-4) (Potato late blight agent).